A 156-amino-acid chain; its full sequence is ATP synthase subunit b (156 aa).

Residues 7–27 (LIGQLIAFALFVAFCMKFVWP) form a helical membrane-spanning segment.

It belongs to the ATPase B chain family. In terms of assembly, F-type ATPases have 2 components, F(1) - the catalytic core - and F(0) - the membrane proton channel. F(1) has five subunits: alpha(3), beta(3), gamma(1), delta(1), epsilon(1). F(0) has three main subunits: a(1), b(2) and c(10-14). The alpha and beta chains form an alternating ring which encloses part of the gamma chain. F(1) is attached to F(0) by a central stalk formed by the gamma and epsilon chains, while a peripheral stalk is formed by the delta and b chains.

The protein localises to the cell inner membrane. In terms of biological role, f(1)F(0) ATP synthase produces ATP from ADP in the presence of a proton or sodium gradient. F-type ATPases consist of two structural domains, F(1) containing the extramembraneous catalytic core and F(0) containing the membrane proton channel, linked together by a central stalk and a peripheral stalk. During catalysis, ATP synthesis in the catalytic domain of F(1) is coupled via a rotary mechanism of the central stalk subunits to proton translocation. Its function is as follows. Component of the F(0) channel, it forms part of the peripheral stalk, linking F(1) to F(0). The protein is ATP synthase subunit b of Actinobacillus pleuropneumoniae serotype 7 (strain AP76).